The chain runs to 174 residues: ATP-dependent protease subunit HslV (174 aa).

Residue T2 is part of the active site. Positions 157, 160, and 163 each coordinate Na(+).

Belongs to the peptidase T1B family. HslV subfamily. In terms of assembly, a double ring-shaped homohexamer of HslV is capped on each side by a ring-shaped HslU homohexamer. The assembly of the HslU/HslV complex is dependent on binding of ATP.

The protein resides in the cytoplasm. The catalysed reaction is ATP-dependent cleavage of peptide bonds with broad specificity.. With respect to regulation, allosterically activated by HslU binding. Protease subunit of a proteasome-like degradation complex believed to be a general protein degrading machinery. The chain is ATP-dependent protease subunit HslV from Shewanella denitrificans (strain OS217 / ATCC BAA-1090 / DSM 15013).